The following is a 1368-amino-acid chain: DNA-directed RNA polymerase subunit beta (1368 aa).

This sequence belongs to the RNA polymerase beta chain family. In terms of assembly, the RNAP catalytic core consists of 2 alpha, 1 beta, 1 beta' and 1 omega subunit. When a sigma factor is associated with the core the holoenzyme is formed, which can initiate transcription.

It carries out the reaction RNA(n) + a ribonucleoside 5'-triphosphate = RNA(n+1) + diphosphate. Functionally, DNA-dependent RNA polymerase catalyzes the transcription of DNA into RNA using the four ribonucleoside triphosphates as substrates. In Cupriavidus metallidurans (strain ATCC 43123 / DSM 2839 / NBRC 102507 / CH34) (Ralstonia metallidurans), this protein is DNA-directed RNA polymerase subunit beta.